We begin with the raw amino-acid sequence, 354 residues long: 3-dehydroquinate synthase (354 aa).

NAD(+)-binding positions include 100–104, 124–125, Lys-136, Lys-145, and 163–166; these read GATGD, TT, and FLKT. Zn(2+)-binding residues include Glu-178, His-242, and His-256.

It belongs to the sugar phosphate cyclases superfamily. Dehydroquinate synthase family. NAD(+) serves as cofactor. Co(2+) is required as a cofactor. The cofactor is Zn(2+).

Its subcellular location is the cytoplasm. The catalysed reaction is 7-phospho-2-dehydro-3-deoxy-D-arabino-heptonate = 3-dehydroquinate + phosphate. It functions in the pathway metabolic intermediate biosynthesis; chorismate biosynthesis; chorismate from D-erythrose 4-phosphate and phosphoenolpyruvate: step 2/7. Functionally, catalyzes the conversion of 3-deoxy-D-arabino-heptulosonate 7-phosphate (DAHP) to dehydroquinate (DHQ). In Staphylococcus aureus (strain COL), this protein is 3-dehydroquinate synthase.